A 428-amino-acid polypeptide reads, in one-letter code: Adenylosuccinate synthetase (428 aa).

GTP is bound by residues 12 to 18 (GDEGKGK) and 40 to 42 (GHT). The active-site Proton acceptor is Asp13. Mg(2+) contacts are provided by Asp13 and Gly40. Residues 13–16 (DEGK), 38–41 (NAGH), Thr128, Arg142, Gln223, Thr238, and Arg302 each bind IMP. His41 serves as the catalytic Proton donor. 298 to 304 (TTTGRPR) lines the substrate pocket. GTP-binding positions include Arg304, 330 to 332 (KLD), and 412 to 414 (SVG).

Belongs to the adenylosuccinate synthetase family. Homodimer. Requires Mg(2+) as cofactor.

The protein localises to the cytoplasm. It catalyses the reaction IMP + L-aspartate + GTP = N(6)-(1,2-dicarboxyethyl)-AMP + GDP + phosphate + 2 H(+). The protein operates within purine metabolism; AMP biosynthesis via de novo pathway; AMP from IMP: step 1/2. In terms of biological role, plays an important role in the de novo pathway of purine nucleotide biosynthesis. Catalyzes the first committed step in the biosynthesis of AMP from IMP. The polypeptide is Adenylosuccinate synthetase (Desulforamulus reducens (strain ATCC BAA-1160 / DSM 100696 / MI-1) (Desulfotomaculum reducens)).